Consider the following 147-residue polypeptide: Probable disulfide formation protein (147 aa).

The chain crosses the membrane as a helical span at residues 9–28 (NYSLYFAWLTALIATLGSLY). Residues cysteine 38 and cysteine 41 are joined by a disulfide bond. The next 2 helical transmembrane spans lie at 43 to 62 (YQRVCIYPLTILLGIAAYRT) and 69 to 86 (YALPLVVLGFLFSVYQYL). An intrachain disulfide couples cysteine 99 to cysteine 106. A helical membrane pass occupies residues 115–138 (GFITLPFLGMLATLIMSFFLIMAF).

Belongs to the DsbB family. BdbC subfamily.

The protein resides in the cell inner membrane. Its function is as follows. Required for disulfide bond formation in some proteins. In Coxiella burnetii (strain CbuG_Q212) (Coxiella burnetii (strain Q212)), this protein is Probable disulfide formation protein.